The sequence spans 371 residues: Tetraacyldisaccharide 4'-kinase (371 aa).

48–55 (SAGGTGKT) contributes to the ATP binding site.

Belongs to the LpxK family.

It catalyses the reaction a lipid A disaccharide + ATP = a lipid IVA + ADP + H(+). It participates in glycolipid biosynthesis; lipid IV(A) biosynthesis; lipid IV(A) from (3R)-3-hydroxytetradecanoyl-[acyl-carrier-protein] and UDP-N-acetyl-alpha-D-glucosamine: step 6/6. In terms of biological role, transfers the gamma-phosphate of ATP to the 4'-position of a tetraacyldisaccharide 1-phosphate intermediate (termed DS-1-P) to form tetraacyldisaccharide 1,4'-bis-phosphate (lipid IVA). The polypeptide is Tetraacyldisaccharide 4'-kinase (Chlorobium chlorochromatii (strain CaD3)).